The sequence spans 275 residues: Glutamate 5-kinase (275 aa).

K17 lines the ATP pocket. The substrate site is built by S57, D144, and N160. Residues 180–181 (SD) and 222–228 (TGGMLSK) each bind ATP.

The protein belongs to the glutamate 5-kinase family.

The protein localises to the cytoplasm. The enzyme catalyses L-glutamate + ATP = L-glutamyl 5-phosphate + ADP. It participates in amino-acid biosynthesis; L-proline biosynthesis; L-glutamate 5-semialdehyde from L-glutamate: step 1/2. Its function is as follows. Catalyzes the transfer of a phosphate group to glutamate to form L-glutamate 5-phosphate. The protein is Glutamate 5-kinase of Streptococcus pyogenes serotype M12 (strain MGAS2096).